The sequence spans 982 residues: E3 ubiquitin-protein ligase CBL-B (982 aa).

Residues 35–167 form a 4H region; the sequence is PPKQAAADRR…KAIFPNGQFQ (133 aa). The 309-residue stretch at 35–343 folds into the Cbl-PTB domain; the sequence is PPKQAAADRR…GRSYNPDLTG (309 aa). The segment at 168-240 is EF-hand-like; the sequence is GDNFRITKAD…FEFDIFTRLF (73 aa). Ca(2+) is bound by residues Asp221, Thr223, Asn225, Tyr227, and Glu232. The SH2-like stretch occupies residues 241 to 343; it reads QPWGSILRNW…GRSYNPDLTG (103 aa). The residue at position 282 (Ser282) is a Phosphoserine; by PKC/PRKCQ. Arg286 serves as a coordination point for 4-O-phospho-L-tyrosine. Positions 344-372 are linker; that stretch reads LCEPTPHDHIKVTQEQYELYCEMGSTFQL. Residue Tyr363 is modified to Phosphotyrosine. The RING-type zinc finger occupies 373–412; the sequence is CKICAENDKDVKIEPCGHLMCTSCLTAWQESDGQGCPFCR. The interval 465–588 is disordered; the sequence is ASVRKCTDRQ…SVPSRDQPMP (124 aa). Over residues 473–486 the composition is skewed to polar residues; sequence RQNSPVTSPGSSPL. A phosphoserine mark is found at Ser476, Ser480, Ser484, Ser521, Ser525, and Ser529. Positions 543 to 567 are interaction with VAV1; that stretch reads PLPAPPPPLRDPPPPPERPPPIPPD. Residues 544–566 are compositionally biased toward pro residues; it reads LPAPPPPLRDPPPPPERPPPIPP. Ser633 is modified (phosphoserine). Residues Tyr664 and Tyr708 each carry the phosphotyrosine modification. Disordered stretches follow at residues 702 to 723 and 745 to 929; these read EDDDDEYKIPSSHPVSLNSQPS and THGA…EAAL. Residues 714–723 are compositionally biased toward polar residues; that stretch reads HPVSLNSQPS. Positions 819–828 are enriched in pro residues; sequence PSLPPPPPPA. Residues 838 to 848 show a composition bias toward low complexity; the sequence is PPGSSSRPSSG. The segment covering 884-899 has biased composition (polar residues); that stretch reads RASQDYDQLPSSSDGS. The residue at position 889 (Tyr889) is a Phosphotyrosine. Residues 891-927 form an interaction with SH3KBP1 region; sequence QLPSSSDGSQAPARPPKPRPRRTAPEIHHRKPHGPEA. Basic residues predominate over residues 906–922; it reads PKPRPRRTAPEIHHRKP. Residues 931–970 enclose the UBA domain; that stretch reads NVDAKIAKLMGEGYAFEEVKRALEIAQNNVEVARSILREF.

Interacts with SH3 domain-containing proteins LCK, CRK and SORBS1. Interacts with LCP2 and ZAP70. Interacts with CBL. Interacts with SH3 domain-containing proteins VAV1, FYN, FGR, PLCG1, GRB2, CRKL, PIK3R1 and SH3KBP1/CIN85. Identified in heterotrimeric complexes with SH3KBP1/CIN85, CD2AP and ARHGEF7, where one CBLB peptide binds two copies of the other protein. Interacts with poly-ubiquitinated proteins. Dimerization is required for the binding of poly-ubiquitin, but not for the binding of mono-ubiquitin. Interacts with EGFR (phosphorylated). Interacts with IFT20. In terms of processing, phosphorylated on tyrosine and serine residues upon TCR or BCR activation. Phosphorylated on Tyr-664 and Tyr-708 in adipocytes following insulin stimulation. Post-translationally, auto-ubiquitinated upon EGF-mediated cell activation or upon T-cell costimulation by CD28; which promotes proteasomal degradation.

It is found in the cytoplasm. The enzyme catalyses S-ubiquitinyl-[E2 ubiquitin-conjugating enzyme]-L-cysteine + [acceptor protein]-L-lysine = [E2 ubiquitin-conjugating enzyme]-L-cysteine + N(6)-ubiquitinyl-[acceptor protein]-L-lysine.. The protein operates within protein modification; protein ubiquitination. Functionally, E3 ubiquitin-protein ligase which accepts ubiquitin from specific E2 ubiquitin-conjugating enzymes, and transfers it to substrates, generally promoting their degradation by the proteasome. Negatively regulates TCR (T-cell receptor), BCR (B-cell receptor) and FCER1 (high affinity immunoglobulin epsilon receptor) signal transduction pathways. In naive T-cells, inhibits VAV1 activation upon TCR engagement and imposes a requirement for CD28 costimulation for proliferation and IL-2 production. Also acts by promoting PIK3R1/p85 ubiquitination, which impairs its recruitment to the TCR and subsequent activation. In activated T-cells, inhibits PLCG1 activation and calcium mobilization upon restimulation and promotes anergy. In B-cells, acts by ubiquitinating SYK and promoting its proteasomal degradation. Slightly promotes SRC ubiquitination. May be involved in EGFR ubiquitination and internalization. May be functionally coupled with the E2 ubiquitin-protein ligase UB2D3. In association with CBL, required for proper feedback inhibition of ciliary platelet-derived growth factor receptor-alpha (PDGFRA) signaling pathway via ubiquitination and internalization of PDGFRA. In Mus musculus (Mouse), this protein is E3 ubiquitin-protein ligase CBL-B (Cblb).